The primary structure comprises 1707 residues: Histone-lysine N-methyltransferase SETD1A (1707 aa).

Positions Leu-60–Gly-89 are interaction with WDR82. One can recognise an RRM domain in the interval Asp-84–Lys-172. Disordered regions lie at residues Pro-194–Ala-308, Thr-331–Asp-363, Ser-381–Ser-486, Leu-506–His-655, Ala-834–Lys-854, Pro-891–Val-1251, and Ala-1264–Leu-1293. Polar residues predominate over residues Asn-239–Gly-277. Low complexity-rich tracts occupy residues Ser-278–Ser-295 and Thr-331–Ser-357. A compositionally biased stretch (pro residues) spans Ser-430 to Pro-440. A phosphoserine mark is found at Ser-459 and Ser-464. The span at Ser-459–Pro-473 shows a compositional bias: low complexity. A compositionally biased stretch (polar residues) spans Glu-474–Ser-486. Phosphoserine is present on residues Ser-508 and Ser-565. Positions Ala-568–Ser-578 are enriched in polar residues. Pro residues-rich tracts occupy residues Ser-593 to Tyr-617 and Gly-624 to His-655. Basic and acidic residues predominate over residues Gln-844–Lys-854. Residue Ser-915 is modified to Phosphoserine. 2 stretches are compositionally biased toward acidic residues: residues Ala-918–Gln-927 and Lys-976–Glu-992. Positions Ala-993–Glu-1002 are enriched in basic and acidic residues. Positions Val-1003–Asp-1012 are enriched in acidic residues. A compositionally biased stretch (low complexity) spans Asp-1032 to Ser-1060. Residues Ala-1077–Val-1094 are compositionally biased toward pro residues. Ser-1103 bears the Phosphoserine mark. Residues Pro-1127–Pro-1145 show a composition bias toward pro residues. Residues Glu-1275–Asp-1284 are compositionally biased toward acidic residues. The HCFC1-binding motif (HBM) motif lies at Glu-1299 to Ala-1303. Disordered regions lie at residues Lys-1307–Pro-1417 and Asn-1472–Tyr-1499. The span at Pro-1308 to Ala-1323 shows a compositional bias: pro residues. Acidic residues predominate over residues Glu-1360 to Ser-1377. Residues Arg-1390–Pro-1403 show a composition bias toward basic residues. Residues Pro-1404 to Ala-1414 show a composition bias toward pro residues. The tract at residues Tyr-1415–Leu-1450 is interaction with CFP1. The tract at residues Leu-1450–Arg-1537 is interaction with ASH2L, RBBP5 and WDR5. Positions Gly-1492–Glu-1497 match the WDR5 interaction motif (WIN) motif. A RxxxRR motif motif is present at residues Arg-1537–Arg-1542. The region spanning Lys-1568–Lys-1685 is the SET domain. Tyr-1684 serves as a coordination point for S-adenosyl-L-methionine. Residues Asn-1691–Asn-1707 form the Post-SET domain.

It belongs to the class V-like SAM-binding methyltransferase superfamily. Component of the SET1A/COMPASS complex composed of the catalytic subunit SETD1A, WDR5, WDR82, RBBP5, ASH2L/ASH2, CXXC1/CFP1, HCFC1 and DPY30 homotrimer. Forms a core complex with the evolutionary conserved subcomplex WRAD composed of WDR5, RBBP5, ASH2L/ASH2 and DPY30 subunits; WRAD differentially stimulates the methyltransferase activity. Interacts with BOD1L1 (via COMPASS-Shg1 domain) at replication forks. Interacts with HCFC1. Interacts with ASH2/ASH2L. Interacts with CXXC1/CFP1. Interacts with RBBP5. Interacts (via N-terminal region) with WDR82; the interaction is direct. Interacts (via the RRM domain) with hyperphosphorylated C-terminal domain (CTD) of RNA polymerase II large subunit (POLR2A) only in the presence of WDR82. Binds specifically to CTD heptad repeats phosphorylated on 'Ser-5' of each heptad. Interacts with ZNF335. Interacts with SUPT6H. Interacts with NAP1L1. Interacts (via WIN motif) with WDR5.

Its subcellular location is the nucleus speckle. The protein localises to the chromosome. The protein resides in the cytoplasm. It catalyses the reaction L-lysyl(4)-[histone H3] + S-adenosyl-L-methionine = N(6)-methyl-L-lysyl(4)-[histone H3] + S-adenosyl-L-homocysteine + H(+). The catalysed reaction is N(6)-methyl-L-lysyl(4)-[histone H3] + S-adenosyl-L-methionine = N(6),N(6)-dimethyl-L-lysyl(4)-[histone H3] + S-adenosyl-L-homocysteine + H(+). The enzyme catalyses N(6),N(6)-dimethyl-L-lysyl(4)-[histone H3] + S-adenosyl-L-methionine = N(6),N(6),N(6)-trimethyl-L-lysyl(4)-[histone H3] + S-adenosyl-L-homocysteine + H(+). Functionally, histone methyltransferase that catalyzes methyl group transfer from S-adenosyl-L-methionine to the epsilon-amino group of 'Lys-4' of histone H3 (H3K4) via a non-processive mechanism. Part of chromatin remodeling machinery, forms H3K4me1, H3K4me2 and H3K4me3 methylation marks at active chromatin sites where transcription and DNA repair take place. Responsible for H3K4me3 enriched promoters and transcriptional programming of inner mass stem cells and neuron progenitors during embryogenesis. Required for H3K4me1 mark at stalled replication forks. Mediates FANCD2-dependent nucleosome remodeling and RAD51 nucleofilaments stabilization at reversed forks, protecting them from nucleolytic degradation. Does not methylate 'Lys-4' of histone H3 if the neighboring 'Lys-9' residue is already methylated. Binds RNAs involved in RNA processing and the DNA damage response. This Homo sapiens (Human) protein is Histone-lysine N-methyltransferase SETD1A (SETD1A).